The primary structure comprises 247 residues: UPF0246 protein LSEI_2080 (247 aa).

It belongs to the UPF0246 family.

This Lacticaseibacillus paracasei (strain ATCC 334 / BCRC 17002 / CCUG 31169 / CIP 107868 / KCTC 3260 / NRRL B-441) (Lactobacillus paracasei) protein is UPF0246 protein LSEI_2080.